A 492-amino-acid chain; its full sequence is Cysteine--tRNA ligase (492 aa).

Cys27 serves as a coordination point for Zn(2+). Residues 29 to 39 carry the 'HIGH' region motif; the sequence is VTVYDLCHLGH. The Zn(2+) site is built by Cys211, His236, and Glu240. The 'KMSKS' region motif lies at 268 to 272; that stretch reads KMSKS. Lys271 serves as a coordination point for ATP.

This sequence belongs to the class-I aminoacyl-tRNA synthetase family. Monomer. Zn(2+) is required as a cofactor.

The protein localises to the cytoplasm. It carries out the reaction tRNA(Cys) + L-cysteine + ATP = L-cysteinyl-tRNA(Cys) + AMP + diphosphate. The sequence is that of Cysteine--tRNA ligase from Prochlorococcus marinus subsp. pastoris (strain CCMP1986 / NIES-2087 / MED4).